Consider the following 353-residue polypeptide: RNA 3'-terminal phosphate cyclase (353 aa).

Residues Q100 and H289–D292 contribute to the ATP site. Residue H315 is the Tele-AMP-histidine intermediate of the active site.

Belongs to the RNA 3'-terminal cyclase family. Type 1 subfamily.

The protein localises to the cytoplasm. It carries out the reaction a 3'-end 3'-phospho-ribonucleotide-RNA + ATP = a 3'-end 2',3'-cyclophospho-ribonucleotide-RNA + AMP + diphosphate. Its function is as follows. Catalyzes the conversion of 3'-phosphate to a 2',3'-cyclic phosphodiester at the end of RNA. The mechanism of action of the enzyme occurs in 3 steps: (A) adenylation of the enzyme by ATP; (B) transfer of adenylate to an RNA-N3'P to produce RNA-N3'PP5'A; (C) and attack of the adjacent 2'-hydroxyl on the 3'-phosphorus in the diester linkage to produce the cyclic end product. The biological role of this enzyme is unknown but it is likely to function in some aspects of cellular RNA processing. In Ignicoccus hospitalis (strain KIN4/I / DSM 18386 / JCM 14125), this protein is RNA 3'-terminal phosphate cyclase.